A 226-amino-acid polypeptide reads, in one-letter code: PKHD-type hydroxylase AZC_3753 (226 aa).

The Fe2OG dioxygenase domain occupies 78-178; the sequence is RILPPMFNRY…RVASFFWTQS (101 aa). Fe cation is bound by residues His-96, Asp-98, and His-159. 2-oxoglutarate is bound at residue Arg-169.

Fe(2+) is required as a cofactor. Requires L-ascorbate as cofactor.

This is PKHD-type hydroxylase AZC_3753 from Azorhizobium caulinodans (strain ATCC 43989 / DSM 5975 / JCM 20966 / LMG 6465 / NBRC 14845 / NCIMB 13405 / ORS 571).